The sequence spans 428 residues: Adenylosuccinate synthetase (428 aa).

Residues 12-18 and 40-42 contribute to the GTP site; these read GDEGKGK and GHT. The Proton acceptor role is filled by Asp-13. Mg(2+) contacts are provided by Asp-13 and Gly-40. Residues 13–16, 38–41, Thr-128, Arg-142, Gln-223, Thr-238, and Arg-302 each bind IMP; these read DEGK and NAGH. The active-site Proton donor is His-41. 298-304 contacts substrate; the sequence is VTTGRPR. GTP-binding positions include Arg-304, 330–332, and 412–414; these read KLD and GTG.

It belongs to the adenylosuccinate synthetase family. Homodimer. The cofactor is Mg(2+).

The protein resides in the cytoplasm. The enzyme catalyses IMP + L-aspartate + GTP = N(6)-(1,2-dicarboxyethyl)-AMP + GDP + phosphate + 2 H(+). It participates in purine metabolism; AMP biosynthesis via de novo pathway; AMP from IMP: step 1/2. In terms of biological role, plays an important role in the de novo pathway of purine nucleotide biosynthesis. Catalyzes the first committed step in the biosynthesis of AMP from IMP. In Bifidobacterium adolescentis (strain ATCC 15703 / DSM 20083 / NCTC 11814 / E194a), this protein is Adenylosuccinate synthetase.